The primary structure comprises 361 residues: S-adenosylmethionine:tRNA ribosyltransferase-isomerase (361 aa).

This sequence belongs to the QueA family. As to quaternary structure, monomer.

It localises to the cytoplasm. It catalyses the reaction 7-aminomethyl-7-carbaguanosine(34) in tRNA + S-adenosyl-L-methionine = epoxyqueuosine(34) in tRNA + adenine + L-methionine + 2 H(+). The protein operates within tRNA modification; tRNA-queuosine biosynthesis. Functionally, transfers and isomerizes the ribose moiety from AdoMet to the 7-aminomethyl group of 7-deazaguanine (preQ1-tRNA) to give epoxyqueuosine (oQ-tRNA). This Rhizobium etli (strain ATCC 51251 / DSM 11541 / JCM 21823 / NBRC 15573 / CFN 42) protein is S-adenosylmethionine:tRNA ribosyltransferase-isomerase.